We begin with the raw amino-acid sequence, 484 residues long: Probable metalloprotease ARX1 (484 aa).

Belongs to the peptidase M24 family. In terms of assembly, component of the nucleoplasmic and cytoplasmic pre-60S ribosomal particles.

Its subcellular location is the cytoplasm. The protein resides in the nucleus. In terms of biological role, probable metalloprotease involved in proper assembly of pre-ribosomal particles during the biogenesis of the 60S ribosomal subunit. Accompanies the pre-60S particles to the cytoplasm. The sequence is that of Probable metalloprotease ARX1 (ARX1) from Yarrowia lipolytica (strain CLIB 122 / E 150) (Yeast).